A 358-amino-acid polypeptide reads, in one-letter code: NADH-quinone oxidoreductase subunit H (358 aa).

A run of 8 helical transmembrane segments spans residues 30–50, 96–116, 129–149, 168–188, 201–221, 265–285, 297–317, and 336–356; these read IAVG…LIYM, FLYN…FACI, VGVF…LLAG, IISY…LMGT, GWFI…YLIA, FIVA…LHII, IPGF…LMWI, and YLVP…AFGF.

Belongs to the complex I subunit 1 family. In terms of assembly, NDH-1 is composed of 14 different subunits. Subunits NuoA, H, J, K, L, M, N constitute the membrane sector of the complex.

The protein resides in the cell inner membrane. The enzyme catalyses a quinone + NADH + 5 H(+)(in) = a quinol + NAD(+) + 4 H(+)(out). In terms of biological role, NDH-1 shuttles electrons from NADH, via FMN and iron-sulfur (Fe-S) centers, to quinones in the respiratory chain. The immediate electron acceptor for the enzyme in this species is believed to be ubiquinone. Couples the redox reaction to proton translocation (for every two electrons transferred, four hydrogen ions are translocated across the cytoplasmic membrane), and thus conserves the redox energy in a proton gradient. This subunit may bind ubiquinone. This is NADH-quinone oxidoreductase subunit H from Bacteroides thetaiotaomicron (strain ATCC 29148 / DSM 2079 / JCM 5827 / CCUG 10774 / NCTC 10582 / VPI-5482 / E50).